A 658-amino-acid polypeptide reads, in one-letter code: Threonine--tRNA ligase (658 aa).

One can recognise a TGS domain in the interval 1-64 (MSNTVSLQFP…GASGKVEIIT (64 aa)). Residues 246–548 (DHRRLGREMD…LIENFAGHMP (303 aa)) are catalytic. Positions 343, 394, and 525 each coordinate Zn(2+).

This sequence belongs to the class-II aminoacyl-tRNA synthetase family. In terms of assembly, homodimer. Zn(2+) is required as a cofactor.

Its subcellular location is the cytoplasm. It carries out the reaction tRNA(Thr) + L-threonine + ATP = L-threonyl-tRNA(Thr) + AMP + diphosphate + H(+). Functionally, catalyzes the attachment of threonine to tRNA(Thr) in a two-step reaction: L-threonine is first activated by ATP to form Thr-AMP and then transferred to the acceptor end of tRNA(Thr). Also edits incorrectly charged L-seryl-tRNA(Thr). The chain is Threonine--tRNA ligase from Brucella canis (strain ATCC 23365 / NCTC 10854 / RM-666).